The sequence spans 139 residues: ATP synthase epsilon chain (139 aa).

It belongs to the ATPase epsilon chain family. In terms of assembly, F-type ATPases have 2 components, CF(1) - the catalytic core - and CF(0) - the membrane proton channel. CF(1) has five subunits: alpha(3), beta(3), gamma(1), delta(1), epsilon(1). CF(0) has three main subunits: a, b and c.

The protein resides in the cell inner membrane. Its function is as follows. Produces ATP from ADP in the presence of a proton gradient across the membrane. This chain is ATP synthase epsilon chain, found in Pectobacterium carotovorum subsp. carotovorum (strain PC1).